The following is a 420-amino-acid chain: Beta-arrestin-2 (420 aa).

Residue Tyr48 is modified to Phosphotyrosine. 2 positions are modified to hydroxyproline; by PHD2: Pro176 and Pro181. The interaction with TRAF6 stretch occupies residues 240–409 (ADICLFSTAQ…EDFARLRLKG (170 aa)). Ser360 is subject to Phosphoserine. An interaction with AP2B1 region spans residues 374 to 420 (PETDAPVDTNLIEFETNYATDDDIVFEDFARLRLKGLKDEDYDDQFC). A Phosphothreonine modification is found at Thr393. The short motif at 396 to 406 (DIVFEDFARLR) is the [DE]-X(1,2)-F-X-X-[FL]-X-X-X-R motif element.

The protein belongs to the arrestin family. As to quaternary structure, homooligomer; the self-association is mediated by InsP6-binding. Heterooligomer with ARRB1; the association is mediated by InsP6-binding. Interacts with ADRB2 and CHRM2. Interacts with PDE4A. Interacts with PDE4D. Interacts with MAPK10, MAPK1 and MAPK3. Interacts with DRD2. Interacts with FSHR. Interacts with CLTC. Interacts with HTR2C. Interacts with CRR5. Interacts with CXCR4. Interacts with SRC. Interacts with DUSP16; the interaction is interrupted by stimulation of AGTR1 and activation of MAPK10. Interacts with CHUK; the interaction is enhanced stimulation of ADRB2. Interacts with RELA. Interacts with MDM2; the interaction is enhanced by activation of GPCRs. Interacts with SLC9A5. Interacts with TRAF6. Interacts with IGF1R. Interacts with ENG. Interacts with KIR2DL1, KIR2DL3 and KIR2DL4. Interacts with LDLR. Interacts with AP2B1. Interacts with C5AR1. Interacts with RAF1. Interacts with MAP2K1. Interacts with MAPK1. Interacts with MAPK10; the interaction enhances MAPK10 activation by MAP3K5. Interacts with MAP2K4; the interaction is enhanced by presence of MAP3K5 and MAPK10. Interacts with MAP3K5. Interacts with AKT1. Interacts with IKBKB and MAP3K14. Interacts with SMO (activated). Interacts with GSK3A and GSK3B. Associates with protein phosphatase 2A (PP2A). Interacts with CXCR4; the interaction is dependent on C-terminal phosphorylation of CXCR4 and allows activation of MAPK1 and MAPK3. Interacts with GPR143. Interacts with HCK and CXCR1 (phosphorylated). Interacts with ACKR3 and ACKR4. Interacts with ARRDC1; the interaction is direct. Interacts with GPR61, GPR62 and GPR135. Interacts (via NACHT and LRR domains) with NLRP3; this interaction is direct and inducible by omega-3 polyunsaturated fatty acids (PUFAs). Interacts with FFAR4 (via C-terminus); this interaction is stimulated by long-chain fatty acids (LCFAs). Interacts with GPR35. Interacts with GPR84. Interacts with TIGIT; this interaction inhibits the NF-kappa-B pathway. Interacts with TGFBR3. In terms of processing, phosphorylated at Thr-382 in the cytoplasm; probably dephosphorylated at the plasma membrane. The phosphorylation does not regulate internalization and recycling of ADRB2, interaction with clathrin or AP2B1. The ubiquitination status appears to regulate the formation and trafficking of beta-arrestin-GPCR complexes and signaling. Ubiquitination appears to occur GPCR-specific. Ubiquitinated by MDM2; the ubiquitination is required for rapid internalization of ADRB2. Deubiquitinated by USP33; the deubiquitination leads to a dissociation of the beta-arrestin-GPCR complex. Stimulation of a class A GPCR, such as ADRB2, induces transient ubiquitination and subsequently promotes association with USP33. Stimulation of a class B GPCR promotes a sustained ubiquitination. Deubiquitinated by USP20; allowing USP20 to deubiquitinate TRAF6 leading to inhibition of NF-kappa-B signaling. Post-translationally, hydroxylation by PHD2 modulates the rate of internalization by slowing down recruitment to the plasma membrane and inhibiting subsequent co-internalization with class A receptors. In terms of tissue distribution, found in a variety of tissues. The short isoform is the most abundant form in all tissues.

It is found in the cytoplasm. Its subcellular location is the nucleus. The protein resides in the cell membrane. The protein localises to the membrane. It localises to the clathrin-coated pit. It is found in the cytoplasmic vesicle. Functionally, functions in regulating agonist-mediated G-protein coupled receptor (GPCR) signaling by mediating both receptor desensitization and resensitization processes. During homologous desensitization, beta-arrestins bind to the GPRK-phosphorylated receptor and sterically preclude its coupling to the cognate G-protein; the binding appears to require additional receptor determinants exposed only in the active receptor conformation. The beta-arrestins target many receptors for internalization by acting as endocytic adapters (CLASPs, clathrin-associated sorting proteins) and recruiting the GPRCs to the adapter protein 2 complex 2 (AP-2) in clathrin-coated pits (CCPs). However, the extent of beta-arrestin involvement appears to vary significantly depending on the receptor, agonist and cell type. Internalized arrestin-receptor complexes traffic to intracellular endosomes, where they remain uncoupled from G-proteins. Two different modes of arrestin-mediated internalization occur. Class A receptors, like ADRB2, OPRM1, ENDRA, D1AR and ADRA1B dissociate from beta-arrestin at or near the plasma membrane and undergo rapid recycling. Class B receptors, like AVPR2, AGTR1, NTSR1, TRHR and TACR1 internalize as a complex with arrestin and traffic with it to endosomal vesicles, presumably as desensitized receptors, for extended periods of time. Receptor resensitization then requires that receptor-bound arrestin is removed so that the receptor can be dephosphorylated and returned to the plasma membrane. Mediates endocytosis of CCR7 following ligation of CCL19 but not CCL21. Involved in internalization of P2RY1, P2RY4, P2RY6 and P2RY11 and ATP-stimulated internalization of P2RY2. Involved in phosphorylation-dependent internalization of OPRD1 and subsequent recycling or degradation. Involved in ubiquitination of IGF1R. Beta-arrestins function as multivalent adapter proteins that can switch the GPCR from a G-protein signaling mode that transmits short-lived signals from the plasma membrane via small molecule second messengers and ion channels to a beta-arrestin signaling mode that transmits a distinct set of signals that are initiated as the receptor internalizes and transits the intracellular compartment. Acts as a signaling scaffold for MAPK pathways such as MAPK1/3 (ERK1/2) and MAPK10 (JNK3). ERK1/2 and JNK3 activated by the beta-arrestin scaffold are largely excluded from the nucleus and confined to cytoplasmic locations such as endocytic vesicles, also called beta-arrestin signalosomes. Acts as a signaling scaffold for the AKT1 pathway. GPCRs for which the beta-arrestin-mediated signaling relies on both ARRB1 and ARRB2 (codependent regulation) include ADRB2, F2RL1 and PTH1R. For some GPCRs the beta-arrestin-mediated signaling relies on either ARRB1 or ARRB2 and is inhibited by the other respective beta-arrestin form (reciprocal regulation). Increases ERK1/2 signaling in AGTR1- and AVPR2-mediated activation (reciprocal regulation). Involved in CCR7-mediated ERK1/2 signaling involving ligand CCL19. Is involved in type-1A angiotensin II receptor/AGTR1-mediated ERK activity. Is involved in type-1A angiotensin II receptor/AGTR1-mediated MAPK10 activity. Is involved in dopamine-stimulated AKT1 activity in the striatum by disrupting the association of AKT1 with its negative regulator PP2A. Involved in AGTR1-mediated chemotaxis. Appears to function as signaling scaffold involved in regulation of MIP-1-beta-stimulated CCR5-dependent chemotaxis. Involved in attenuation of NF-kappa-B-dependent transcription in response to GPCR or cytokine stimulation by interacting with and stabilizing CHUK. Suppresses UV-induced NF-kappa-B-dependent activation by interacting with CHUK. The function is promoted by stimulation of ADRB2 and dephosphorylation of ARRB2. Involved in p53/TP53-mediated apoptosis by regulating MDM2 and reducing the MDM2-mediated degradation of p53/TP53. May serve as nuclear messenger for GPCRs. Upon stimulation of OR1D2, may be involved in regulation of gene expression during the early processes of fertilization. Also involved in regulation of receptors other than GPCRs. Involved in endocytosis of TGFBR2 and TGFBR3 and down-regulates TGF-beta signaling such as NF-kappa-B activation. Involved in endocytosis of low-density lipoprotein receptor/LDLR. Involved in endocytosis of smoothened homolog/Smo, which also requires GRK2. Involved in endocytosis of SLC9A5. Involved in endocytosis of ENG and subsequent TGF-beta-mediated ERK activation and migration of epithelial cells. Involved in Toll-like receptor and IL-1 receptor signaling through the interaction with TRAF6 which prevents TRAF6 autoubiquitination and oligomerization required for activation of NF-kappa-B and JUN. Involved in insulin resistance by acting as insulin-induced signaling scaffold for SRC, AKT1 and INSR. Involved in regulation of inhibitory signaling of natural killer cells by recruiting PTPN6 and PTPN11 to KIR2DL1. Involved in IL8-mediated granule release in neutrophils. Involved in the internalization of the atypical chemokine receptor ACKR3. Acts as an adapter protein coupling FFAR4 receptor to specific downstream signaling pathways, as well as mediating receptor endocytosis. During the activation step of NLRP3 inflammasome, directly associates with NLRP3 leading to inhibition of pro-inflammatory cytokine release and inhibition of inflammation. The polypeptide is Beta-arrestin-2 (ARRB2) (Bos taurus (Bovine)).